The primary structure comprises 1322 residues: Myosin-1 (1322 aa).

The Myosin motor domain occupies 42–728 (AGVSDMTLLT…TLFALETMRD (687 aa)). 135–142 (GESGAGKT) contributes to the ATP binding site. Serine 369 is subject to Phosphoserine. The actin-binding stretch occupies residues 417–499 (VIGVLDIYGF…PGIFSALNDA (83 aa)). 2 consecutive IQ domains span residues 732-752 (HNMA…REES) and 753-778 (ARRI…YGHQ). Positions 786 to 980 (RRRFSLISMR…SGEPPTSVSR (195 aa)) constitute a TH1 domain. Disordered stretches follow at residues 966-1090 (IVSV…MPSY) and 1137-1162 (VQQL…ATPA). Composition is skewed to low complexity over residues 1000 to 1017 (SRPV…PTTT) and 1027 to 1056 (GGTA…ASGA). Polar residues-rich tracts occupy residues 1078–1087 (PATSAPSSGM) and 1137–1148 (VQQLGSSSTAQT). Positions 1184 to 1243 (RRLPRYRALYDFETQEAGELPLRTGDIVELEEKEENGWWLVKKGSTEGWSPADYLELIAE) constitute an SH3 domain. Residues 1246-1300 (AAKPRPPPPAKPASAKPAAAPARVSQSSVTSSWTPPDSHAAPVAVMPGMGDPGGF) are disordered. The segment covering 1257–1267 (PASAKPAAAPA) has biased composition (low complexity). Positions 1269 to 1280 (VSQSSVTSSWTP) are enriched in polar residues.

Belongs to the TRAFAC class myosin-kinesin ATPase superfamily. Myosin family. Post-translationally, phosphorylation of the TEDS site (Ser-369) is required for the polarization of the actin cytoskeleton. Phosphorylation probably activates the myosin-I ATPase activity.

Its subcellular location is the cytoplasm. It localises to the cytoskeleton. The protein localises to the actin patch. Type-I myosin implicated in the organization of the actin cytoskeleton. Required for proper actin cytoskeleton polarization. At the cell cortex, assembles in patch-like structures together with proteins from the actin-polymerizing machinery and promotes actin assembly. Functions as actin nucleation-promoting factor (NPF) for the Arp2/3 complex. This Malassezia globosa (strain ATCC MYA-4612 / CBS 7966) (Dandruff-associated fungus) protein is Myosin-1 (MYO1).